The sequence spans 263 residues: MLELRLVQGSLLKKVLEAIRELVNDANFDCSGTGFSLQAMDSSHVALVALLLRAEGFEHYRCDRNLSMGMNLNNMAKMLRCAGNDDIITIKADDGSDTVTFMFESPKQDKIADFEMKLMDIDSEHLGIPDSEYQAIVRMPSSEFMRICKDLSSIGDTVVISVTKEGVKFSTSGEIGSANIVCRQNQTIDKPEEATIIEMQEPVSLTFALRYMNSFTKASSLSEQVTISLSSELPVVVEYKIAEMGYIRFYLAPKIEDDEEMKP.

The DNA-binding element occupies 61 to 80; sequence RCDRNLSMGMNLNNMAKMLR.

The protein belongs to the PCNA family.

The protein resides in the nucleus. In terms of biological role, this protein is an auxiliary protein of DNA polymerase delta and is involved in the control of eukaryotic DNA replication by increasing the polymerase's processibility during elongation of the leading strand. In Zea mays (Maize), this protein is Proliferating cell nuclear antigen (PCNA).